We begin with the raw amino-acid sequence, 816 residues long: Metabotropic glutamate receptor-like protein E (816 aa).

The first 27 residues, 1–27 (MKIKIGNILKNVVILVIFSLFISKINS), serve as a signal peptide directing secretion. Residues 28-436 (EVVKPNPAKP…QVVVFDRTLN (409 aa)) lie on the Extracellular side of the membrane. Residues N68, N311, and N388 are each glycosylated (N-linked (GlcNAc...) asparagine). A helical transmembrane segment spans residues 437-457 (IVLGVITGVCVLIVIGIGSVI). Residues 458–469 (ALQWRKFRYSSP) are Cytoplasmic-facing. Residues 470–490 (LFCMFIIIGALMGLASVFTLL) form a helical membrane-spanning segment. The Extracellular segment spans residues 491-496 (PTPTTP). The helical transmembrane segment at 497 to 517 (LCSGFPWLLGLGYVIVFGTLF) threads the bilayer. Topologically, residues 518-541 (TKTWRTWRLFSNARKFKIIRITNK) are cytoplasmic. The helical transmembrane segment at 542 to 562 (FIITLVGGFVLLESIFMIIWT) threads the bilayer. Residues 563-590 (AVDRPIPLAEPIFKAGEAQLQCTSDSEA) are Extracellular-facing. The chain crosses the membrane as a helical span at residues 591–611 (WWYVFVFYKVFYILFGVFLAF). Residues 612–625 (KTRNVVDSLNESKP) lie on the Cytoplasmic side of the membrane. Residues 626-646 (ITLALYNLTFVMVVAIALGFI) form a helical membrane-spanning segment. The Extracellular portion of the chain corresponds to 647–653 (LRDNPIA). A helical transmembrane segment spans residues 654–674 (IIVIQTIAILLGFTVTVSVLF). The Cytoplasmic segment spans residues 675-816 (LPKVWMILSG…KKKKKKNNNK (142 aa)). The interval 697–718 (DSMGRSNGNTTEAESTRGYTNK) is disordered.

Belongs to the G-protein coupled receptor 3 family.

It is found in the membrane. May be involved in early development in cAMP sensing and subsequent chemotactic response. Probable receptor of GABA and glutamate, leading respectively to the induction or inhibition of SDF-2 formation. The sequence is that of Metabotropic glutamate receptor-like protein E (grlE) from Dictyostelium discoideum (Social amoeba).